Here is a 390-residue protein sequence, read N- to C-terminus: Nicotinate phosphoribosyltransferase (390 aa).

At histidine 211 the chain carries Phosphohistidine; by autocatalysis.

It belongs to the NAPRTase family. Post-translationally, transiently phosphorylated on a His residue during the reaction cycle. Phosphorylation strongly increases the affinity for substrates and increases the rate of nicotinate D-ribonucleotide production. Dephosphorylation regenerates the low-affinity form of the enzyme, leading to product release.

The enzyme catalyses nicotinate + 5-phospho-alpha-D-ribose 1-diphosphate + ATP + H2O = nicotinate beta-D-ribonucleotide + ADP + phosphate + diphosphate. It functions in the pathway cofactor biosynthesis; NAD(+) biosynthesis; nicotinate D-ribonucleotide from nicotinate: step 1/1. Catalyzes the synthesis of beta-nicotinate D-ribonucleotide from nicotinate and 5-phospho-D-ribose 1-phosphate at the expense of ATP. The chain is Nicotinate phosphoribosyltransferase from Chromohalobacter salexigens (strain ATCC BAA-138 / DSM 3043 / CIP 106854 / NCIMB 13768 / 1H11).